Reading from the N-terminus, the 200-residue chain is Inducible T-cell costimulator (200 aa).

An N-terminal signal peptide occupies residues 1–20 (MKPYFSCVFVFCFLIKLLTG). The Extracellular portion of the chain corresponds to 21–145 (ELNDLANHRM…LCCQLKLWLP (125 aa)). The region spanning 30-133 (MFSFHDGGVQ…LSGGYLLIYE (104 aa)) is the Ig-like V-type domain. Cystine bridges form between cysteine 42–cysteine 109 and cysteine 63–cysteine 83. Asparagine 89 and asparagine 123 each carry an N-linked (GlcNAc...) asparagine glycan. A helical membrane pass occupies residues 146–166 (VGCAAFVAALLFGCIFIVWFA). At 167–200 (KKKYRSSVHDPNSEYMFMAAVNTNKKSRLAGMTS) the chain is on the cytoplasmic side.

Homodimer; disulfide-linked. Interacts with ICOSLG. Interacts with PIK3R1. Interacts with TBK1; this interaction is critical for the maturation of T follicular regulatory cells. N-glycosylated. In terms of tissue distribution, strongly expressed in the spleen and lung. Lower expression seen in liver, kidney and testis.

It localises to the cell membrane. In terms of biological role, stimulatory receptor expressed in activated or antigen-experienced T-cells that plays an important role in the immune response. Upon binding to its ligand ICOSL expressed on antigen presenting cells (APCs), delivers costimulatory signals that enhances all basic T-cell responses to a foreign antigen, namely proliferation, secretion of lymphokines including IL10, up-regulation of molecules that mediate cell-cell interaction, and effective help for antibody secretion by B-cells. Also acts as a costimulatory receptor critical for the differentiation of T follicular regulatory cells upon immune challenges such as viral infection. Mechanistically, potentiates TCR-induced calcium flux by augmenting PLCG1 activation and actin remodeling. In addition, activates PI3K signaling pathways independently of calcium flux. Essential both for efficient interaction between T and B-cells and for normal antibody responses to T-cell dependent antigens. Prevents the apoptosis of pre-activated T-cells. Plays a critical role in CD40-mediated class switching of immunoglobin isotypes. This chain is Inducible T-cell costimulator (Icos), found in Rattus norvegicus (Rat).